The sequence spans 767 residues: 5-methyltetrahydropteroyltriglutamate--homocysteine methyltransferase (767 aa).

Position 19 (K19) interacts with 5-methyltetrahydropteroyltri-L-glutamate. S89 bears the Phosphoserine mark. A 5-methyltetrahydropteroyltri-L-glutamate-binding site is contributed by N126. A Phosphoserine modification is found at S242. L-homocysteine is bound by residues 444–446 (IGS) and E497. L-methionine contacts are provided by residues 444 to 446 (IGS) and E497. Residues D502, Y525, and 528–529 (RY) contribute to the 5-methyltetrahydropteroyltri-L-glutamate site. T566 carries the post-translational modification Phosphothreonine. A 5-methyltetrahydropteroyltri-L-glutamate-binding site is contributed by W574. D612 serves as a coordination point for L-homocysteine. D612 is an L-methionine binding site. Position 629 is a phosphoserine (S629). Zn(2+)-binding residues include H655, C657, and E677. Residue H705 is the Proton donor of the active site. Position 706 is a phosphoserine (S706). C737 serves as a coordination point for Zn(2+).

It belongs to the vitamin-B12 independent methionine synthase family. Requires Zn(2+) as cofactor.

The catalysed reaction is 5-methyltetrahydropteroyltri-L-glutamate + L-homocysteine = tetrahydropteroyltri-L-glutamate + L-methionine. Its pathway is amino-acid biosynthesis; L-methionine biosynthesis via de novo pathway; L-methionine from L-homocysteine (MetE route): step 1/1. Catalyzes the transfer of a methyl group from 5-methyltetrahydrofolate to homocysteine resulting in methionine formation. The polypeptide is 5-methyltetrahydropteroyltriglutamate--homocysteine methyltransferase (MET6) (Saccharomyces cerevisiae (strain ATCC 204508 / S288c) (Baker's yeast)).